Reading from the N-terminus, the 227-residue chain is Mitochondrial inner membrane protease ATP23 (227 aa).

A divalent metal cation is bound at residue His124. Glu125 is an active-site residue. His128 is an a divalent metal cation binding site.

It belongs to the peptidase M76 family. In terms of assembly, interacts with ATP6.

The protein resides in the mitochondrion inner membrane. Functionally, has a dual role in the assembly of mitochondrial ATPase. Acts as a protease that removes the N-terminal 10 residues of mitochondrial ATPase CF(0) subunit 6 (ATP6) at the intermembrane space side. Also involved in the correct assembly of the membrane-embedded ATPase CF(0) particle, probably mediating association of ATP6 with the subunit 9 ring. The chain is Mitochondrial inner membrane protease ATP23 (ATP23) from Saccharomyces cerevisiae (strain YJM789) (Baker's yeast).